A 205-amino-acid polypeptide reads, in one-letter code: Probable GTP-binding protein EngB (205 aa).

An EngB-type G domain is found at 27 to 201 (SGIEIAFAGR…AAKLDSWFAP (175 aa)). GTP is bound by residues 35–42 (GRSNAGKS), 62–66 (GRTQL), 80–83 (DLPG), 147–150 (TKAD), and 180–182 (FSA). Mg(2+) contacts are provided by S42 and T64.

Belongs to the TRAFAC class TrmE-Era-EngA-EngB-Septin-like GTPase superfamily. EngB GTPase family. The cofactor is Mg(2+).

Necessary for normal cell division and for the maintenance of normal septation. This chain is Probable GTP-binding protein EngB, found in Pasteurella multocida (strain Pm70).